The sequence spans 871 residues: Metabotropic glutamate receptor 6 (871 aa).

The N-terminal stretch at M1 to G23 is a signal peptide. Residues A24–W579 lie on the Extracellular side of the membrane. A disulfide bond links C51 and C93. L-glutamate contacts are provided by residues S148, A169–T171, and Y219. 7 disulfides stabilise this stretch: C238–C530, C361–C377, C417–C424, C512–C531, C516–C534, C537–C549, and C552–C565. N-linked (GlcNAc...) asparagine glycosylation occurs at N290. An L-glutamate-binding site is contributed by D301. K394 is a binding site for L-glutamate. 2 N-linked (GlcNAc...) asparagine glycosylation sites follow: N445 and N473. N-linked (GlcNAc...) asparagine glycosylation is present at N561. Residues A580–M602 traverse the membrane as a helical segment. At R603–E616 the chain is on the cytoplasmic side. A helical transmembrane segment spans residues L617–A637. Residues E638–R648 are Extracellular-facing. Residues L649–N667 form a helical membrane-spanning segment. The Cytoplasmic segment spans residues R668–Q691. The chain crosses the membrane as a helical span at residues L692 to A712. The Extracellular portion of the chain corresponds to Q713 to D742. Residues L743 to I764 form a helical membrane-spanning segment. Residues K765–K777 are Cytoplasmic-facing. A helical membrane pass occupies residues P778–T800. Topologically, residues A801–T813 are extracellular. Residues L814–F839 traverse the membrane as a helical segment. The Cytoplasmic segment spans residues H840 to K871. A disordered region spans residues R850–K871.

It belongs to the G-protein coupled receptor 3 family. Homodimer. Interacts with GPR179. Interacts with photoreceptor synaptic protein LRIT1 (via its N-terminal extracellular domain). Restricted expression in the inner nuclear layer of the retina.

The protein localises to the cell membrane. It is found in the endoplasmic reticulum membrane. Its subcellular location is the golgi apparatus membrane. The protein resides in the cell projection. It localises to the dendrite. Its function is as follows. G-protein coupled receptor for glutamate. Ligand binding causes a conformation change that triggers signaling via guanine nucleotide-binding proteins (G proteins) and modulates the activity of down-stream effectors, such as adenylate cyclase. Signaling inhibits adenylate cyclase activity. Signaling stimulates TRPM1 channel activity and Ca(2+) uptake. Required for normal vision. This Rattus norvegicus (Rat) protein is Metabotropic glutamate receptor 6 (Grm6).